Here is a 684-residue protein sequence, read N- to C-terminus: UvrABC system protein C (684 aa).

The region spanning 16 to 95 (TDPGVYKFRD…IKRFDPRFNV (80 aa)) is the GIY-YIG domain. A UVR domain is found at 208–243 (APVRKRVTQRMEEAAENLEFELAARLRDDLGAIDKL). The span at 332 to 352 (EAAEDAKLERRGVDQESHAEP) shows a compositional bias: basic and acidic residues. The interval 332–357 (EAAEDAKLERRGVDQESHAEPRQGNA) is disordered.

Belongs to the UvrC family. In terms of assembly, interacts with UvrB in an incision complex.

The protein localises to the cytoplasm. Its function is as follows. The UvrABC repair system catalyzes the recognition and processing of DNA lesions. UvrC both incises the 5' and 3' sides of the lesion. The N-terminal half is responsible for the 3' incision and the C-terminal half is responsible for the 5' incision. The polypeptide is UvrABC system protein C (Corynebacterium aurimucosum (strain ATCC 700975 / DSM 44827 / CIP 107346 / CN-1) (Corynebacterium nigricans)).